Here is a 364-residue protein sequence, read N- to C-terminus: DNA polymerase IV (364 aa).

Positions 6-186 (IIHIDMDAFY…LPIESFWGVG (181 aa)) constitute a UmuC domain. 2 residues coordinate Mg(2+): aspartate 10 and aspartate 104. Glutamate 105 is a catalytic residue.

It belongs to the DNA polymerase type-Y family. As to quaternary structure, monomer. It depends on Mg(2+) as a cofactor.

It localises to the cytoplasm. The enzyme catalyses DNA(n) + a 2'-deoxyribonucleoside 5'-triphosphate = DNA(n+1) + diphosphate. In terms of biological role, poorly processive, error-prone DNA polymerase involved in untargeted mutagenesis. Copies undamaged DNA at stalled replication forks, which arise in vivo from mismatched or misaligned primer ends. These misaligned primers can be extended by PolIV. Exhibits no 3'-5' exonuclease (proofreading) activity. May be involved in translesional synthesis, in conjunction with the beta clamp from PolIII. This is DNA polymerase IV from Bacteroides fragilis (strain YCH46).